Here is a 258-residue protein sequence, read N- to C-terminus: Deoxyribose-phosphate aldolase (258 aa).

Asp102 functions as the Proton donor/acceptor in the catalytic mechanism. Lys165 (schiff-base intermediate with acetaldehyde) is an active-site residue. Lys199 acts as the Proton donor/acceptor in catalysis.

Belongs to the DeoC/FbaB aldolase family. DeoC type 2 subfamily.

It localises to the cytoplasm. It carries out the reaction 2-deoxy-D-ribose 5-phosphate = D-glyceraldehyde 3-phosphate + acetaldehyde. It functions in the pathway carbohydrate degradation; 2-deoxy-D-ribose 1-phosphate degradation; D-glyceraldehyde 3-phosphate and acetaldehyde from 2-deoxy-alpha-D-ribose 1-phosphate: step 2/2. In terms of biological role, catalyzes a reversible aldol reaction between acetaldehyde and D-glyceraldehyde 3-phosphate to generate 2-deoxy-D-ribose 5-phosphate. In Aliivibrio salmonicida (strain LFI1238) (Vibrio salmonicida (strain LFI1238)), this protein is Deoxyribose-phosphate aldolase.